A 976-amino-acid chain; its full sequence is Protein PLASTID MOVEMENT IMPAIRED 1-RELATED 2 (976 aa).

In terms of domain architecture, C2 NT-type spans 81–229; sequence IAHFGQRRFD…VLNLSFDYSV (149 aa). Positions 309–319 are enriched in basic and acidic residues; the sequence is KQAADSDDSGK. Disordered stretches follow at residues 309-343 and 381-419; these read KQAA…ESSR and NLLP…STEK. A compositionally biased stretch (low complexity) spans 394 to 414; it reads STFSSQVISESSESKSPSAMD.

Its function is as follows. Seems not necessary for chloroplast and nuclear photorelocation movements. The sequence is that of Protein PLASTID MOVEMENT IMPAIRED 1-RELATED 2 from Arabidopsis thaliana (Mouse-ear cress).